The primary structure comprises 191 residues: GTP-dependent dephospho-CoA kinase (191 aa).

GTP contacts are provided by D46, D65, K67, and E122.

It belongs to the GTP-dependent DPCK family.

It carries out the reaction 3'-dephospho-CoA + GTP = GDP + CoA + H(+). It functions in the pathway cofactor biosynthesis; coenzyme A biosynthesis. Its function is as follows. Catalyzes the GTP-dependent phosphorylation of the 3'-hydroxyl group of dephosphocoenzyme A to form coenzyme A (CoA). The protein is GTP-dependent dephospho-CoA kinase of Methanopyrus kandleri (strain AV19 / DSM 6324 / JCM 9639 / NBRC 100938).